The sequence spans 709 residues: Phosphoprotein (709 aa).

The tract at residues 1 to 35 is N0 binding; that stretch reads MDKLELVNDGLNIIDFIQKNQKEIQKTYGRSSIQQ. Residues 53–92 are disordered; the sequence is SGESEQVEGGMSKDDGDVERRNLEDLSSTSPTDGTIGKRV. Residues 63 to 76 show a composition bias toward basic and acidic residues; the sequence is MSKDDGDVERRNLE. The tract at residues 110–140 is interaction with host STAT1; sequence VVTDVVYHDHGGECTGYGFTSSPERGWSDYT. At Ser-257 the chain carries Phosphoserine; by host. Residues 265-324 are disordered; it reads ISPEDEEPSSVGGKPNESIGRTIEGQSIRDNLQAKDNKSTDVPGAGPKDSAVKEEPPQKR. The residue at position 350 (Ser-350) is a Phosphoserine; by host. Positions 384–473 are disordered; that stretch reads VQTADRQRPG…VNPVDDNDSL (90 aa). 2 stretches are compositionally biased toward polar residues: residues 416–426 and 444–456; these read GTENVPGSKSG and NAEN…STAV. Positions 475–580 are multimerization; the sequence is DKYIMPSDDF…LVSMMIMIPG (106 aa).

In terms of assembly, homotetramer. Interacts (via multimerization domain) with polymerase L; this interaction forms the polymerase L-P complex. Interacts (via N-terminus) with N0 (via Ncore); this interaction allows P to chaperon N0 to avoid N polymerization before encapsidation. Interacts (via C-terminus) with N-RNA template (via C-terminus); this interaction positions the polymerase on the template for both transcription and replication. Interacts with host STAT1.

The protein resides in the virion. The protein localises to the host cytoplasm. In terms of biological role, essential cofactor of the RNA polymerase L that plays a central role in the transcription and replication by forming the polymerase complex with RNA polymerase L and recruiting L to the genomic N-RNA template for RNA synthesis. Also plays a central role in the encapsidation of nascent RNA chains by forming the encapsidation complex with the nucleocapsid protein N (N-P complex). Acts as a chaperone for newly synthesized free N protein, so-called N0, allowing encapsidation of nascent RNA chains during replication. The nucleoprotein protein N prevents excessive phosphorylation of P, which leads to down-regulation of viral transcription/ replication. Participates, together with N, in the formation of viral factories (viroplasms), which are large inclusions in the host cytoplasm where replication takes place. The protein is Phosphoprotein (P/V/C) of Nipah virus.